An 85-amino-acid chain; its full sequence is Probable Thioredoxin (85 aa).

A Glutaredoxin domain is found at 2–85 (VVNIEVFTSP…LFEAINDEME (84 aa)). A disulfide bridge connects residues Cys13 and Cys16.

It belongs to the glutaredoxin family.

The protein resides in the cytoplasm. Acts to maintain redox homeostasis; functions as a protein disulfide reductase. In Methanothermobacter thermautotrophicus (strain ATCC 29096 / DSM 1053 / JCM 10044 / NBRC 100330 / Delta H) (Methanobacterium thermoautotrophicum), this protein is Probable Thioredoxin.